Reading from the N-terminus, the 172-residue chain is Lipoprotein signal peptidase (172 aa).

The next 4 membrane-spanning stretches (helical) occupy residues 4-24, 39-59, 69-89, and 93-113; these read LSSS…LDQV, VAIL…AFSF, WFFT…LAKL, and WTLE…NVID. Catalysis depends on residues Asp122 and Asp140. Residues 136 to 156 form a helical membrane-spanning segment; sequence FNVADMGISIGAVLLIISEFW.

This sequence belongs to the peptidase A8 family.

The protein resides in the cell inner membrane. It catalyses the reaction Release of signal peptides from bacterial membrane prolipoproteins. Hydrolyzes -Xaa-Yaa-Zaa-|-(S,diacylglyceryl)Cys-, in which Xaa is hydrophobic (preferably Leu), and Yaa (Ala or Ser) and Zaa (Gly or Ala) have small, neutral side chains.. Its pathway is protein modification; lipoprotein biosynthesis (signal peptide cleavage). Its function is as follows. This protein specifically catalyzes the removal of signal peptides from prolipoproteins. The sequence is that of Lipoprotein signal peptidase from Hydrogenovibrio crunogenus (strain DSM 25203 / XCL-2) (Thiomicrospira crunogena).